An 89-amino-acid chain; its full sequence is Small ribosomal subunit protein uS15 (89 aa).

This sequence belongs to the universal ribosomal protein uS15 family. In terms of assembly, part of the 30S ribosomal subunit. Forms a bridge to the 50S subunit in the 70S ribosome, contacting the 23S rRNA.

Its function is as follows. One of the primary rRNA binding proteins, it binds directly to 16S rRNA where it helps nucleate assembly of the platform of the 30S subunit by binding and bridging several RNA helices of the 16S rRNA. Forms an intersubunit bridge (bridge B4) with the 23S rRNA of the 50S subunit in the ribosome. This is Small ribosomal subunit protein uS15 from Desulforapulum autotrophicum (strain ATCC 43914 / DSM 3382 / VKM B-1955 / HRM2) (Desulfobacterium autotrophicum).